The primary structure comprises 897 residues: Interleukin enhancer-binding factor 3-A (897 aa).

In terms of domain architecture, DZF spans 5-379 (RIFLNDDRHV…PLKRPIEEDG (375 aa)). Disordered stretches follow at residues 52–85 (QEKD…GENP), 364–403 (TTYA…PPQV), and 466–502 (MGLP…EVDS). 2 stretches are compositionally biased toward basic and acidic residues: residues 72–81 (EEGKDSEMKT) and 373–384 (RPIEEDGDDKSP). The Bipartite nuclear localization signal motif lies at 372–390 (KRPIEEDGDDKSPSKKKKK). DRBM domains lie at 399–468 (EPPQ…DMGL) and 521–587 (HGKN…KLFP). Disordered regions lie at residues 627–650 (PPPQ…GRGG) and 708–797 (GDSY…AQGA). Positions 637–650 (RGGMNRGRGRGRGG) are enriched in gly residues. Positions 714 to 747 (PTPPKPFVNKKPPPPQQQQQQQPPPQHASNPPKP) are enriched in pro residues. Over residues 749-794 (YNQGYQGHQGGQQQQQQQQQQQTYNQNQYSNYGPPQKQKGGYNQGA) the composition is skewed to low complexity.

In terms of assembly, a component of a ybx2/frgy2-containing mRNA-ribonucleoprotein (mRNP) complex. Also a component of the CCAAT box transcription factor (CBTF) complex. In terms of processing, phosphorylated. Phosphorylation affects nuclear translocation. Post-translationally, methylated by protein arginine N-methyltransferase 1 (prmt1b) in the RGG-rich domain. Methylation decreases DNA-binding and thereby decreases transcription of the gata2 gene, but does not regulate dsRNA binding or subcellular localization. As to expression, expressed mainly in the ectoderm (at protein level).

The protein localises to the nucleus. It is found in the cytoplasm. RNA-binding protein that plays an essential role in the biogenesis of circular RNAs (circRNAs) which are produced by back-splicing circularization of pre-mRNAs. Within the nucleus, promotes circRNAs processing by stabilizing the regulatory elements residing in the flanking introns of the circularized exons. Plays thereby a role in the back-splicing of a subset of circRNAs. As a consequence, participates in a wide range of transcriptional and post-transcriptional processes. Binds to poly-U elements and AU-rich elements (AREs) in the 3'-UTR of target mRNAs. Upon viral infection, ILF3 accumulates in the cytoplasm and participates in the innate antiviral response. Mechanistically, ILF3 becomes phosphorylated and activated by the double-stranded RNA-activated protein kinase/PKR which releases ILF3 from cellular mature circRNAs. In turn, unbound ILF3 molecules are able to interact with and thus inhibit viral mRNAs. Has a cytoplasmic role early in development as part of a ribonucleoprotein (mRNP) complex which may regulate mRNA transport and/or translation. Following nuclear localization at the mid-blastula transition, acts as a transcription factor and binds the 5'-CCAAT-3' promoter sequence to regulate transcription of the gata2 gene as a subunit of the CCAAT box transcription factor (CBTF). Its role as an mRNP component negatively regulates its activity as a transcription factor by precluding its nuclear localization. The chain is Interleukin enhancer-binding factor 3-A (ilf3-a) from Xenopus laevis (African clawed frog).